We begin with the raw amino-acid sequence, 429 residues long: MPVIEQVGAREILDSRGNPTVEVEVVLIDGTFARAAVPSGASTGEYEAVELRDGDGRYGGKGVKRAVDAVLDEIGPVVIGLNANDQRLIDQELLDLDGTPDKSRLGGNAILGVSLAVAKAAADSAELPLFRYIGGSNAHILPVPMMNILNGGAHADTAVDVQEFMVAPIGAPSFVEALRWGAEVYHALKSVLKKKGLSTGLGDEGGFAPEVAGTTAALDLVTLAIEAAGFKPGADVALALDAAATEFYTDGIGYHFEGMTHTADQMTEFYADLLGSYPLVSIEDPLSEDDWDGWAALTASIGEQVQIVGDDIFATNPERLEEGIGRGVANALLVKVNQIGTLTETLEAVALAHHSGYRTMISHRSGETEDTMIADLVVALGSGQIKTGAPARSERVAKYNQLLRIEEELGDAARYAGDLAFLRYVVETR.

Gln-162 contacts (2R)-2-phosphoglycerate. Residue Glu-204 is the Proton donor of the active site. Residues Asp-241, Glu-283, and Asp-310 each coordinate Mg(2+). Positions 335, 364, 365, and 386 each coordinate (2R)-2-phosphoglycerate. The Proton acceptor role is filled by Lys-335.

The protein belongs to the enolase family. Requires Mg(2+) as cofactor.

Its subcellular location is the cytoplasm. The protein resides in the secreted. It localises to the cell surface. The catalysed reaction is (2R)-2-phosphoglycerate = phosphoenolpyruvate + H2O. Its pathway is carbohydrate degradation; glycolysis; pyruvate from D-glyceraldehyde 3-phosphate: step 4/5. Functionally, catalyzes the reversible conversion of 2-phosphoglycerate (2-PG) into phosphoenolpyruvate (PEP). It is essential for the degradation of carbohydrates via glycolysis. This Mycobacterium leprae (strain TN) protein is Enolase.